The chain runs to 216 residues: Proenkephalin-A-B (216 aa).

5 consecutive propeptides follow at residues 64–85 (MDEL…LAKN), 93–131 (EYDS…GEMN), 144–155 (STDLEDETRGIQ), 165–175 (VGRPEWWQDYQ), and 183–207 (TRFT…PDME). Positions 114–133 (PESAIYHDNNSETPGEMNKR) are disordered.

Belongs to the opioid neuropeptide precursor family. In terms of processing, the N-terminal domain contains 6 conserved cysteines thought to be involved in disulfide bonding and/or processing.

Its subcellular location is the secreted. Enkephalin neuropeptides compete with and mimic the effects of opiate drugs. They play a role in a number of physiologic functions, including pain perception and responses to stress. The chain is Proenkephalin-A-B (penk-b) from Xenopus laevis (African clawed frog).